The sequence spans 604 residues: uncharacterized protein (604 aa).

A disordered region spans residues 239–259; the sequence is ELNSPQELNDPQELNNSQDLN.

This is an uncharacterized protein from Escherichia coli (strain K12).